A 305-amino-acid polypeptide reads, in one-letter code: UDP-N-acetylenolpyruvoylglucosamine reductase (305 aa).

The FAD-binding PCMH-type domain maps to 33 to 198 (RVGGPAQVLF…TGGTFRGRRA (166 aa)). Arginine 178 is an active-site residue. The active-site Proton donor is serine 227. Glutamate 297 is an active-site residue.

The protein belongs to the MurB family. It depends on FAD as a cofactor.

The protein resides in the cytoplasm. It catalyses the reaction UDP-N-acetyl-alpha-D-muramate + NADP(+) = UDP-N-acetyl-3-O-(1-carboxyvinyl)-alpha-D-glucosamine + NADPH + H(+). The protein operates within cell wall biogenesis; peptidoglycan biosynthesis. In terms of biological role, cell wall formation. The chain is UDP-N-acetylenolpyruvoylglucosamine reductase from Nitrobacter hamburgensis (strain DSM 10229 / NCIMB 13809 / X14).